Reading from the N-terminus, the 83-residue chain is Phytosulfokines 4 (83 aa).

An N-terminal signal peptide occupies residues 1-28; that stretch reads MAARTVAVAAALAVLLIFAASSATVAMA. Positions 29–74 are excised as a propeptide; sequence GRPTPTTSLDEEAAQAAAQSEIGGGCKEGEGEEECLARRTLTAHTD. Sulfotyrosine is present on residues Tyr-75 and Tyr-77. The propeptide occupies 80–83; it reads QHHN.

Belongs to the phytosulfokine family. In terms of processing, sulfation is important for activity and for the binding to a putative membrane receptor. Post-translationally, PSK-alpha is produced by endopeptidase digestion. PSK-beta is produced from PSK-alpha by exopeptidase digestion.

The protein localises to the secreted. Its function is as follows. Promotes plant cell differentiation, organogenesis and somatic embryogenesis as well as cell proliferation. This chain is Phytosulfokines 4 (PSK4), found in Oryza sativa subsp. japonica (Rice).